A 1610-amino-acid polypeptide reads, in one-letter code: Protein TASOR (1610 aa).

The interval 1–96 is disordered; that stretch reads MATAAETEAP…PERPFRRSFQ (96 aa). The residue at position 2 (Ala-2) is an N-acetylalanine. Residues 41-51 are compositionally biased toward gly residues; it reads NGGGDGGGGAG. The segment covering 52-61 has biased composition (low complexity); it reads PEETAAAEAA. Ser-339 is modified (phosphoserine). Residue Lys-581 forms a Glycyl lysine isopeptide (Lys-Gly) (interchain with G-Cter in SUMO2) linkage. Ser-628, Ser-631, and Ser-668 each carry phosphoserine. Disordered stretches follow at residues 631–671 and 687–710; these read SDYE…SLDY and KKNV…RKLE. Basic and acidic residues-rich tracts occupy residues 652 to 671 and 697 to 710; these read NSRD…SLDY and EDTK…RKLE. Ser-793 is modified (phosphoserine). Glycyl lysine isopeptide (Lys-Gly) (interchain with G-Cter in SUMO2) cross-links involve residues Lys-816 and Lys-825. At Ser-836 the chain carries Phosphoserine. Lys-866 participates in a covalent cross-link: Glycyl lysine isopeptide (Lys-Gly) (interchain with G-Cter in SUMO2). The segment at 915–941 is disordered; it reads TGGNAGSPEDQHGKHGEKQTPDTLKGT. Phosphoserine is present on residues Ser-921 and Lys-928. Basic and acidic residues predominate over residues 923 to 934; sequence EDQHGKHGEKQT. A Phosphothreonine modification is found at Thr-1004. Phosphoserine occurs at positions 1059 and 1508.

Belongs to the TASOR family. Component of the HUSH complex; at least composed of TASOR, PPHLN1 and MPHOSPH8. Interacts with MORC2; the interaction associateS MORC2 with the HUSH complex which recruits MORC2 to heterochromatic loci. Interacts with ZNF638; leading to recruitment of the HUSH complex to unintegrated retroviral DNA. Interacts with INPP5A, EML1, SV1L, GPSM2, ITGB3BP, CNTN1, ETFA, PSMD8, S100A10, MPHOSPH8, TMEM100, ALB, PARPBP, HCFC2, NCBP1 and SETDB1. Present in skin, brain and testis (at protein level). Ubiquitously expressed at low levels in the majority of the organs, expressed at higher levels in kidneys, spleen, thymus, seminal vesicles, uterus, and ovaries and its expression is almost six times higher in male tissues than in females. Highly expressed in seminiferous tubules with a strong signal in Sertoli cells, spermatogonia, and spermatocytes.

The protein resides in the nucleus. It localises to the chromosome. Functionally, component of the HUSH complex, a multiprotein complex that mediates epigenetic repression. The HUSH complex is recruited to genomic loci rich in H3K9me3 and is required to maintain transcriptional silencing by promoting recruitment of SETDB1, a histone methyltransferase that mediates further deposition of H3K9me3, as well as MORC2. Also represses L1 retrotransposons in collaboration with MORC2 and, probably, SETDB1, the silencing is dependent of repressive epigenetic modifications, such as H3K9me3 mark. Silencing events often occur within introns of transcriptionally active genes, and lead to the down-regulation of host gene expression. The HUSH complex is also involved in the silencing of unintegrated retroviral DNA by being recruited by ZNF638: some part of the retroviral DNA formed immediately after infection remains unintegrated in the host genome and is transcriptionally repressed. Plays a crucial role in early embryonic development. Involved in the organization of spindle poles and spindle apparatus assembly during zygotic division. Plays an important role in maintaining epiblast fitness or potency. In Mus musculus (Mouse), this protein is Protein TASOR.